Reading from the N-terminus, the 932-residue chain is RNA-binding protein 12 (932 aa).

The disordered stretch occupies residues 97–116; it reads IPPANASRSGPPPSSGMSGR. Low complexity predominate over residues 98 to 116; that stretch reads PPANASRSGPPPSSGMSGR. The 76-residue stretch at 304–379 folds into the RRM 1 domain; sequence LYVSVHGMPF…RYVEVSPATE (76 aa). Phosphoserine is present on residues Ser352 and Ser375. Polar residues-rich tracts occupy residues 392 to 401 and 408 to 417; these read KQNMGPSGQT and LPRSKSPSGQ. The disordered stretch occupies residues 392–424; that stretch reads KQNMGPSGQTHPPPQTLPRSKSPSGQKRSRSRS. 3 positions are modified to phosphoserine: Ser420, Ser422, and Ser424. Residues 430–507 enclose the RRM 2 domain; it reads FCVYLKGLPF…RFIQVHPITK (78 aa). Ser525 is subject to Phosphoserine. Low complexity predominate over residues 717 to 734; that stretch reads NGPPFNFPGNFGGSNAFG. A disordered region spans residues 717–855; it reads NGPPFNFPGN…PGFASSSGKP (139 aa). Over residues 783–811 the composition is skewed to gly residues; it reads SGFGGGPQNFGNGPGSLGGPPGFGSGPPG. Positions 824–838 are enriched in pro residues; the sequence is AFGPGPGPGPGPGPG. The RRM 3 domain maps to 856 to 932; sequence GPTVIKVQNM…PIGSRKVNLY (77 aa).

The protein localises to the nucleus. The polypeptide is RNA-binding protein 12 (RBM12) (Pongo abelii (Sumatran orangutan)).